A 151-amino-acid polypeptide reads, in one-letter code: Cytochrome c-type biogenesis protein CcmE (151 aa).

Over 1 to 8 the chain is Cytoplasmic; it reads MNPLRRKR. The chain crosses the membrane as a helical; Signal-anchor for type II membrane protein span at residues 9 to 29; the sequence is LLIILAILVGVGVAVGLALSA. Residues 30 to 151 lie on the Periplasmic side of the membrane; the sequence is LQQNINLFYT…QSAPTPAKEG (122 aa). Heme is bound by residues His124 and Tyr128.

The protein belongs to the CcmE/CycJ family.

It is found in the cell inner membrane. In terms of biological role, heme chaperone required for the biogenesis of c-type cytochromes. Transiently binds heme delivered by CcmC and transfers the heme to apo-cytochromes in a process facilitated by CcmF and CcmH. The protein is Cytochrome c-type biogenesis protein CcmE of Pseudomonas fluorescens biotype C.